The chain runs to 251 residues: tRNA (guanine-N(7)-)-methyltransferase (251 aa).

S-adenosyl-L-methionine is bound by residues glycine 71, 94-95 (EL), 128-129 (NS), and leucine 148. Aspartate 151 is a catalytic residue. 226 to 228 (TEE) is an S-adenosyl-L-methionine binding site.

It belongs to the class I-like SAM-binding methyltransferase superfamily. TrmB family.

It localises to the nucleus. It catalyses the reaction guanosine(46) in tRNA + S-adenosyl-L-methionine = N(7)-methylguanosine(46) in tRNA + S-adenosyl-L-homocysteine. Its pathway is tRNA modification; N(7)-methylguanine-tRNA biosynthesis. In terms of biological role, catalyzes the formation of N(7)-methylguanine at position 46 (m7G46) in tRNA. The sequence is that of tRNA (guanine-N(7)-)-methyltransferase from Arabidopsis thaliana (Mouse-ear cress).